A 203-amino-acid chain; its full sequence is Protein GrpE 2 (203 aa).

Residues 1–12 (MPTRPQEPDRAA) show a composition bias toward basic and acidic residues. The disordered stretch occupies residues 1-64 (MPTRPQEPDR…APAEDEYTTA (64 aa)). Low complexity predominate over residues 45–56 (GEPGPDAAGPAP).

The protein belongs to the GrpE family. Homodimer.

The protein localises to the cytoplasm. Its function is as follows. Participates actively in the response to hyperosmotic and heat shock by preventing the aggregation of stress-denatured proteins, in association with DnaK and GrpE. It is the nucleotide exchange factor for DnaK and may function as a thermosensor. Unfolded proteins bind initially to DnaJ; upon interaction with the DnaJ-bound protein, DnaK hydrolyzes its bound ATP, resulting in the formation of a stable complex. GrpE releases ADP from DnaK; ATP binding to DnaK triggers the release of the substrate protein, thus completing the reaction cycle. Several rounds of ATP-dependent interactions between DnaJ, DnaK and GrpE are required for fully efficient folding. The sequence is that of Protein GrpE 2 from Streptomyces avermitilis (strain ATCC 31267 / DSM 46492 / JCM 5070 / NBRC 14893 / NCIMB 12804 / NRRL 8165 / MA-4680).